A 162-amino-acid polypeptide reads, in one-letter code: NADH-quinone oxidoreductase subunit I (162 aa).

4Fe-4S ferredoxin-type domains lie at 53–83 (LRRY…IESE) and 93–122 (TRYD…ETHI). [4Fe-4S] cluster is bound by residues Cys63, Cys66, Cys69, Cys73, Cys102, Cys105, Cys108, and Cys112.

Belongs to the complex I 23 kDa subunit family. In terms of assembly, NDH-1 is composed of 14 different subunits. Subunits NuoA, H, J, K, L, M, N constitute the membrane sector of the complex. The cofactor is [4Fe-4S] cluster.

The protein localises to the cell inner membrane. It carries out the reaction a quinone + NADH + 5 H(+)(in) = a quinol + NAD(+) + 4 H(+)(out). In terms of biological role, NDH-1 shuttles electrons from NADH, via FMN and iron-sulfur (Fe-S) centers, to quinones in the respiratory chain. The immediate electron acceptor for the enzyme in this species is believed to be ubiquinone. Couples the redox reaction to proton translocation (for every two electrons transferred, four hydrogen ions are translocated across the cytoplasmic membrane), and thus conserves the redox energy in a proton gradient. This chain is NADH-quinone oxidoreductase subunit I, found in Herminiimonas arsenicoxydans.